Reading from the N-terminus, the 248-residue chain is Probable transcriptional regulatory protein Acid345_2125 (248 aa).

The protein belongs to the TACO1 family.

It is found in the cytoplasm. This chain is Probable transcriptional regulatory protein Acid345_2125, found in Koribacter versatilis (strain Ellin345).